The following is a 280-amino-acid chain: Dermonecrotic toxin LgSicTox-alphaIA1 (280 aa).

The active site involves histidine 12. Residues glutamate 32 and aspartate 34 each contribute to the Mg(2+) site. Histidine 48 functions as the Nucleophile in the catalytic mechanism. An intrachain disulfide couples cysteine 52 to cysteine 58. Residue aspartate 92 coordinates Mg(2+).

The protein belongs to the arthropod phospholipase D family. Class I subfamily. Mg(2+) is required as a cofactor. As to expression, expressed by the venom gland.

It localises to the secreted. The catalysed reaction is an N-(acyl)-sphingosylphosphocholine = an N-(acyl)-sphingosyl-1,3-cyclic phosphate + choline. The enzyme catalyses an N-(acyl)-sphingosylphosphoethanolamine = an N-(acyl)-sphingosyl-1,3-cyclic phosphate + ethanolamine. It catalyses the reaction a 1-acyl-sn-glycero-3-phosphocholine = a 1-acyl-sn-glycero-2,3-cyclic phosphate + choline. It carries out the reaction a 1-acyl-sn-glycero-3-phosphoethanolamine = a 1-acyl-sn-glycero-2,3-cyclic phosphate + ethanolamine. Dermonecrotic toxins cleave the phosphodiester linkage between the phosphate and headgroup of certain phospholipids (sphingolipid and lysolipid substrates), forming an alcohol (often choline) and a cyclic phosphate. This toxin acts on sphingomyelin (SM). It may also act on ceramide phosphoethanolamine (CPE), lysophosphatidylcholine (LPC) and lysophosphatidylethanolamine (LPE), but not on lysophosphatidylserine (LPS), and lysophosphatidylglycerol (LPG). It acts by transphosphatidylation, releasing exclusively cyclic phosphate products as second products. Induces dermonecrosis, hemolysis, increased vascular permeability, edema, inflammatory response, and platelet aggregation. This Loxosceles gaucho (Spider) protein is Dermonecrotic toxin LgSicTox-alphaIA1.